Reading from the N-terminus, the 380-residue chain is Queuine tRNA-ribosyltransferase (380 aa).

Asp89 serves as the catalytic Proton acceptor. Substrate contacts are provided by residues 89-93, Asp143, Gln187, and Gly214; that span reads DSGGF. The tract at residues 245–251 is RNA binding; the sequence is GVGKPED. Asp264 functions as the Nucleophile in the catalytic mechanism. The interval 269–273 is RNA binding; important for wobble base 34 recognition; the sequence is TRNAR. Zn(2+) is bound by residues Cys302, Cys304, Cys307, and His333.

The protein belongs to the queuine tRNA-ribosyltransferase family. As to quaternary structure, homodimer. Within each dimer, one monomer is responsible for RNA recognition and catalysis, while the other monomer binds to the replacement base PreQ1. Zn(2+) is required as a cofactor.

The catalysed reaction is 7-aminomethyl-7-carbaguanine + guanosine(34) in tRNA = 7-aminomethyl-7-carbaguanosine(34) in tRNA + guanine. It participates in tRNA modification; tRNA-queuosine biosynthesis. Catalyzes the base-exchange of a guanine (G) residue with the queuine precursor 7-aminomethyl-7-deazaguanine (PreQ1) at position 34 (anticodon wobble position) in tRNAs with GU(N) anticodons (tRNA-Asp, -Asn, -His and -Tyr). Catalysis occurs through a double-displacement mechanism. The nucleophile active site attacks the C1' of nucleotide 34 to detach the guanine base from the RNA, forming a covalent enzyme-RNA intermediate. The proton acceptor active site deprotonates the incoming PreQ1, allowing a nucleophilic attack on the C1' of the ribose to form the product. After dissociation, two additional enzymatic reactions on the tRNA convert PreQ1 to queuine (Q), resulting in the hypermodified nucleoside queuosine (7-(((4,5-cis-dihydroxy-2-cyclopenten-1-yl)amino)methyl)-7-deazaguanosine). The chain is Queuine tRNA-ribosyltransferase from Proteus mirabilis (strain HI4320).